The primary structure comprises 167 residues: Shikimate kinase (167 aa).

Residue 12 to 17 coordinates ATP; the sequence is GSGKTT. Mg(2+) is bound at residue T16. 3 residues coordinate substrate: D34, R58, and G80. Residue R117 coordinates ATP. R135 lines the substrate pocket. R152 is a binding site for ATP.

Belongs to the shikimate kinase family. As to quaternary structure, monomer. Mg(2+) serves as cofactor.

It localises to the cytoplasm. It catalyses the reaction shikimate + ATP = 3-phosphoshikimate + ADP + H(+). It functions in the pathway metabolic intermediate biosynthesis; chorismate biosynthesis; chorismate from D-erythrose 4-phosphate and phosphoenolpyruvate: step 5/7. Its function is as follows. Catalyzes the specific phosphorylation of the 3-hydroxyl group of shikimic acid using ATP as a cosubstrate. The protein is Shikimate kinase of Salinispora tropica (strain ATCC BAA-916 / DSM 44818 / JCM 13857 / NBRC 105044 / CNB-440).